A 72-amino-acid polypeptide reads, in one-letter code: Translation initiation factor IF-1 (72 aa).

The 72-residue stretch at 1 to 72 (MTKEENIEMQ…SKGRIIFRSR (72 aa)) folds into the S1-like domain.

This sequence belongs to the IF-1 family. In terms of assembly, component of the 30S ribosomal translation pre-initiation complex which assembles on the 30S ribosome in the order IF-2 and IF-3, IF-1 and N-formylmethionyl-tRNA(fMet); mRNA recruitment can occur at any time during PIC assembly.

Its subcellular location is the cytoplasm. Its function is as follows. One of the essential components for the initiation of protein synthesis. Stabilizes the binding of IF-2 and IF-3 on the 30S subunit to which N-formylmethionyl-tRNA(fMet) subsequently binds. Helps modulate mRNA selection, yielding the 30S pre-initiation complex (PIC). Upon addition of the 50S ribosomal subunit IF-1, IF-2 and IF-3 are released leaving the mature 70S translation initiation complex. This chain is Translation initiation factor IF-1, found in Wigglesworthia glossinidia brevipalpis.